We begin with the raw amino-acid sequence, 415 residues long: Teichoic acid D-alanyltransferase (415 aa).

At 1 to 16 the chain is on the extracellular side; that stretch reads MIDFLKQLPHLEPYGN. A helical transmembrane segment spans residues 17 to 36; that stretch reads PFYFIYLGIALLPIFIGLFF. Topologically, residues 37-40 are cytoplasmic; the sequence is KKRF. The helical transmembrane segment at 41–56 threads the bilayer; it reads AIYECLVSITFIVLAL. The Extracellular segment spans residues 57-60; the sequence is TGTH. The helical transmembrane segment at 61 to 87 threads the bilayer; sequence ASQILALLFYIVWQIIWVYSYKRYRSQ. Residues 88-90 lie on the Cytoplasmic side of the membrane; it reads RDN. A helical membrane pass occupies residues 91-115; the sequence is KWVFYLHSFLVVLPLILVKVEPTIN. Residues 116 to 125 are Extracellular-facing; sequence GTQSLLNFLG. Residues 126–142 form a helical membrane-spanning segment; sequence ISYLTFRAVGMIIEMRD. Residues 143 to 149 are Cytoplasmic-facing; the sequence is GVLKEFT. An intramembrane segment occupies 150 to 179; it reads LGEFLRFMLFMPTFTSGPIDRFKRFNEDYQ. Residues 180–183 lie on the Cytoplasmic side of the membrane; that stretch reads SIPN. A helical membrane pass occupies residues 184 to 227; that stretch reads RDELLNMLEQAVKYIMLGFLYKFVLAQIFGSMLLPPLKAQALSQ. At 228 to 232 the chain is on the extracellular side; that stretch reads GGIFN. A helical membrane pass occupies residues 233–264; it reads LPTLGVMYVYGFDLFFDFAGYSMFALAVSNLM. At 265-274 the chain is on the cytoplasmic side; it reads GIKSPINFDK. An intramembrane segment occupies 275–311; the sequence is PFISRDMKEFWNRWHMSLSFWFRDFVFMRLVIVLMRN. The Cytoplasmic segment spans residues 312–316; that stretch reads KVFKN. A helical transmembrane segment spans residues 317 to 336; that stretch reads RNTTSNVAYIINMMVMGFWH. The active site involves His-336. The Extracellular portion of the chain corresponds to 337–339; the sequence is GIT. The chain crosses the membrane as a helical span at residues 340–373; sequence WYYIAYGIFHGIGLVINDAWLRKKKTINKDRKKA. Topologically, residues 374–381 are cytoplasmic; it reads GLKPLPEN. The chain crosses the membrane as a helical span at residues 382 to 404; it reads KWTKALGIFITFNTVMLSFLIFS. At 405–415 the chain is on the extracellular side; sequence GFLNDLWFTKK.

This sequence belongs to the membrane-bound acyltransferase family.

It localises to the cell membrane. Its pathway is cell wall biogenesis; lipoteichoic acid biosynthesis. Functionally, O-acyltransferase that catalyzes D-alanylation of both teichoic acid and lipoteichoic acid (LTA). D-alanylation of LTA plays an important role in modulating the properties of the cell wall in Gram-positive bacteria, influencing the net charge of the cell wall. Catalyzes D-alanylation from DltC carrier protein. The sequence is that of Teichoic acid D-alanyltransferase from Streptococcus thermophilus (strain ATCC BAA-250 / LMG 18311).